The primary structure comprises 724 residues: Catalase-peroxidase (724 aa).

The tryptophyl-tyrosyl-methioninium (Trp-Tyr) (with M-252) cross-link spans 98-226 (WHAAGSYRTA…LAAVQMGLIY (129 aa)). Histidine 99 acts as the Proton acceptor in catalysis. Residues 226-252 (YVNPQGVNGEPDPLRTALHVRETFARM) constitute a cross-link (tryptophyl-tyrosyl-methioninium (Tyr-Met) (with W-98)). Histidine 267 lines the heme b pocket.

The protein belongs to the peroxidase family. Peroxidase/catalase subfamily. In terms of assembly, homodimer or homotetramer. Heme b is required as a cofactor. Formation of the three residue Trp-Tyr-Met cross-link is important for the catalase, but not the peroxidase activity of the enzyme.

It carries out the reaction H2O2 + AH2 = A + 2 H2O. The enzyme catalyses 2 H2O2 = O2 + 2 H2O. In terms of biological role, bifunctional enzyme with both catalase and broad-spectrum peroxidase activity. This is Catalase-peroxidase from Cereibacter sphaeroides (strain ATCC 17025 / ATH 2.4.3) (Rhodobacter sphaeroides).